Here is a 72-residue protein sequence, read N- to C-terminus: Large ribosomal subunit protein bL28 (72 aa).

This sequence belongs to the bacterial ribosomal protein bL28 family.

The protein is Large ribosomal subunit protein bL28 of Chlorobium phaeobacteroides (strain BS1).